The sequence spans 631 residues: Fatty acid ABC transporter ATP-binding/permease protein (631 aa).

A compositionally biased stretch (low complexity) spans 1–11 (MTAPPGARPRA). Positions 1-20 (MTAPPGARPRAASPPPNMRS) are disordered. 3 helical membrane-spanning segments follow: residues 42–62 (IAVITLGIAGTTIGVIVPRIL), 123–143 (LALALALYLAAALMIWAQARL), and 205–225 (ILTMVAVLAMMVSISGLLALI). Positions 42 to 365 (IAVITLGIAG…LAGMYNALQS (324 aa)) constitute an ABC transmembrane type-1 domain. Residues 397–631 (VEFEHVNFAY…RGVYYQMTRA (235 aa)) form the ABC transporter domain. 430–437 (GPTGAGKT) is a binding site for ATP.

It belongs to the ABC transporter superfamily. Lipid exporter (TC 3.A.1.106) family.

It is found in the cell inner membrane. Its function is as follows. ABC transporter involved in fatty acid import. Transmembrane domains (TMD) form a pore in the membrane and the ATP-binding domain (NBD) is responsible for energy generation. The chain is Fatty acid ABC transporter ATP-binding/permease protein from Mycobacterium bovis (strain ATCC BAA-935 / AF2122/97).